A 246-amino-acid chain; its full sequence is Thaumatin-like protein 1a (246 aa).

The N-terminal stretch at 1 to 24 (MMKSQVASLLGLTLAILFFSGAHA) is a signal peptide. 8 cysteine pairs are disulfide-bonded: cysteine 33–cysteine 245, cysteine 81–cysteine 91, cysteine 96–cysteine 103, cysteine 151–cysteine 234, cysteine 156–cysteine 217, cysteine 164–cysteine 180, cysteine 184–cysteine 193, and cysteine 194–cysteine 204.

Belongs to the thaumatin family.

Its subcellular location is the secreted. This is Thaumatin-like protein 1a (TL1) from Malus domestica (Apple).